Here is a 566-residue protein sequence, read N- to C-terminus: Membrane protein insertase YidC (566 aa).

A run of 5 helical transmembrane segments spans residues 3–23 (IKRI…FNAW), 346–366 (GWLW…HAVV), 369–389 (WGWS…WFSA), 436–456 (GGCL…YVII), and 509–529 (MWIL…GLVL).

It belongs to the OXA1/ALB3/YidC family. Type 1 subfamily. As to quaternary structure, interacts with the Sec translocase complex via SecD. Specifically interacts with transmembrane segments of nascent integral membrane proteins during membrane integration.

It localises to the cell inner membrane. Functionally, required for the insertion and/or proper folding and/or complex formation of integral membrane proteins into the membrane. Involved in integration of membrane proteins that insert both dependently and independently of the Sec translocase complex, as well as at least some lipoproteins. Aids folding of multispanning membrane proteins. The polypeptide is Membrane protein insertase YidC (Coxiella burnetii (strain CbuK_Q154) (Coxiella burnetii (strain Q154))).